A 207-amino-acid chain; its full sequence is Ribosomal RNA small subunit methyltransferase G (207 aa).

S-adenosyl-L-methionine-binding positions include Gly75, Phe80, 126–127 (LE), and Arg140.

This sequence belongs to the methyltransferase superfamily. RNA methyltransferase RsmG family.

It localises to the cytoplasm. It carries out the reaction guanosine(527) in 16S rRNA + S-adenosyl-L-methionine = N(7)-methylguanosine(527) in 16S rRNA + S-adenosyl-L-homocysteine. Its function is as follows. Specifically methylates the N7 position of guanine in position 527 of 16S rRNA. In Erythrobacter litoralis (strain HTCC2594), this protein is Ribosomal RNA small subunit methyltransferase G.